A 79-amino-acid polypeptide reads, in one-letter code: uncharacterized protein (79 aa).

The disordered stretch occupies residues 1–27 (MRQRGQEHLPTSVKSEPRACNNPTVAE).

This is an uncharacterized protein from Homo sapiens (Human).